We begin with the raw amino-acid sequence, 385 residues long: tRNA(Met) cytidine acetate ligase (385 aa).

Residues 7–20 (VAEY…HEFL), Gly101, Asn153, and Arg178 each bind ATP.

This sequence belongs to the TmcAL family.

It localises to the cytoplasm. The enzyme catalyses cytidine(34) in elongator tRNA(Met) + acetate + ATP = N(4)-acetylcytidine(34) in elongator tRNA(Met) + AMP + diphosphate. Functionally, catalyzes the formation of N(4)-acetylcytidine (ac(4)C) at the wobble position of elongator tRNA(Met), using acetate and ATP as substrates. First activates an acetate ion to form acetyladenylate (Ac-AMP) and then transfers the acetyl group to tRNA to form ac(4)C34. This is tRNA(Met) cytidine acetate ligase from Lactobacillus gasseri (strain ATCC 33323 / DSM 20243 / BCRC 14619 / CIP 102991 / JCM 1131 / KCTC 3163 / NCIMB 11718 / NCTC 13722 / AM63).